The chain runs to 58 residues: Potassium channel toxin alpha-KTx 16.6 (58 aa).

The N-terminal stretch at 1–22 (MKILSVLLIALIICSINICSEA) is a signal peptide. Intrachain disulfides connect cysteine 29-cysteine 50, cysteine 35-cysteine 55, and cysteine 39-cysteine 57.

This sequence belongs to the short scorpion toxin superfamily. Potassium channel inhibitor family. Alpha-KTx 16 subfamily. In terms of tissue distribution, expressed by the venom gland.

The protein resides in the secreted. Functionally, inhibits potassium channel. The polypeptide is Potassium channel toxin alpha-KTx 16.6 (Buthus israelis (Israeli scorpion)).